The chain runs to 142 residues: Large ribosomal subunit protein uL11 (142 aa).

Belongs to the universal ribosomal protein uL11 family. Part of the ribosomal stalk of the 50S ribosomal subunit. Interacts with L10 and the large rRNA to form the base of the stalk. L10 forms an elongated spine to which L12 dimers bind in a sequential fashion forming a multimeric L10(L12)X complex. Post-translationally, one or more lysine residues are methylated.

Forms part of the ribosomal stalk which helps the ribosome interact with GTP-bound translation factors. In Bradyrhizobium diazoefficiens (strain JCM 10833 / BCRC 13528 / IAM 13628 / NBRC 14792 / USDA 110), this protein is Large ribosomal subunit protein uL11.